Reading from the N-terminus, the 229-residue chain is uncharacterized protein (229 aa).

This is an uncharacterized protein from Ureaplasma parvum serovar 3 (strain ATCC 700970).